The following is a 202-amino-acid chain: Xanthine phosphoribosyltransferase (202 aa).

Residues leucine 20 and asparagine 27 each contribute to the xanthine site. 128-132 (ANGEA) provides a ligand contact to 5-phospho-alpha-D-ribose 1-diphosphate. Xanthine is bound at residue lysine 156.

Belongs to the purine/pyrimidine phosphoribosyltransferase family. Xpt subfamily. In terms of assembly, homodimer.

The protein localises to the cytoplasm. The catalysed reaction is XMP + diphosphate = xanthine + 5-phospho-alpha-D-ribose 1-diphosphate. The protein operates within purine metabolism; XMP biosynthesis via salvage pathway; XMP from xanthine: step 1/1. In terms of biological role, converts the preformed base xanthine, a product of nucleic acid breakdown, to xanthosine 5'-monophosphate (XMP), so it can be reused for RNA or DNA synthesis. In Alkaliphilus metalliredigens (strain QYMF), this protein is Xanthine phosphoribosyltransferase.